The following is a 262-amino-acid chain: Ribosomal RNA small subunit methyltransferase A (262 aa).

6 residues coordinate S-adenosyl-L-methionine: His16, Leu18, Gly43, Glu64, Asp89, and Asn109.

Belongs to the class I-like SAM-binding methyltransferase superfamily. rRNA adenine N(6)-methyltransferase family. RsmA subfamily.

Its subcellular location is the cytoplasm. It carries out the reaction adenosine(1518)/adenosine(1519) in 16S rRNA + 4 S-adenosyl-L-methionine = N(6)-dimethyladenosine(1518)/N(6)-dimethyladenosine(1519) in 16S rRNA + 4 S-adenosyl-L-homocysteine + 4 H(+). Specifically dimethylates two adjacent adenosines (A1518 and A1519) in the loop of a conserved hairpin near the 3'-end of 16S rRNA in the 30S particle. May play a critical role in biogenesis of 30S subunits. In Xanthomonas axonopodis pv. citri (strain 306), this protein is Ribosomal RNA small subunit methyltransferase A.